The chain runs to 155 residues: Gene 5 protein (155 aa).

The interval 1-26 is disordered; that stretch reads MGTRGPIGKRDEERVRRNTPDSPTDT. Positions 8–19 are enriched in basic and acidic residues; sequence GKRDEERVRRNT.

The chain is Gene 5 protein (5) from Mycobacterium phage L5 (Mycobacteriophage L5).